The sequence spans 324 residues: MNKIMLCLLVCGVVHAATYDLLKAPNYFEDFLHKFNKNYSSESEKLHRFKIFQHNLEEIINKNQNDSTAQYEINKFSDLSKEEAISKYTGLSLPHQTQNFCEVVILDRPPDRGPLEFDWRQFNKVTSVKNQGVCGACWAFATLGSLESQFAIKYNRLINLSEQQFIDCDRVNAGCDGGLLHTAFESAMEMGGVQMESDYPYETANGQCRINPNRFVVGVRSCRRYIVMFEEKLKDLLRAVGPIPVAIDASDIVNYRRGIMRQCANHGLNHAVLLVGYAVENNIPYWILKNTWGTDWGEDGYFRVQQNINACGIRNELVSSAEIY.

Positions 1 to 16 (MNKIMLCLLVCGVVHA) are cleaved as a signal peptide. A propeptide spans 17–113 (ATYDLLKAPN…VILDRPPDRG (97 aa)) (activation peptide). Disulfide bonds link C134–C175, C168–C208, and C263–C311. Residue C137 is part of the active site. N159 carries an N-linked (GlcNAc...) asparagine; by host glycan. Catalysis depends on residues H270 and N290.

This sequence belongs to the peptidase C1 family. Synthesized as an inactive proenzyme and activated by proteolytic removal of the inhibitory propeptide.

It carries out the reaction Endopeptidase of broad specificity, hydrolyzing substrates of both cathepsin L and cathepsin B.. In terms of biological role, cysteine protease that plays an essential role in host liquefaction to facilitate horizontal transmission of the virus. May participate in the degradation of foreign protein expressed by the baculovirus system. The chain is Viral cathepsin (VCATH) from Orgyia pseudotsugata (Douglas-fir tussock moth).